Here is a 200-residue protein sequence, read N- to C-terminus: Glutathione peroxidase 1 (200 aa).

At Ser31 the chain carries Phosphoserine. Sec46 is a catalytic residue. Position 46 (Sec46) is a non-standard amino acid, selenocysteine. N6-acetyllysine; alternate occurs at positions 85 and 111. N6-succinyllysine; alternate is present on residues Lys85 and Lys111. Residue Lys118 is modified to N6-acetyllysine. Lys145 is modified (N6-acetyllysine; alternate). The residue at position 145 (Lys145) is an N6-succinyllysine; alternate. Phosphoserine is present on Ser194.

Belongs to the glutathione peroxidase family. As to quaternary structure, homotetramer. Interacts with MIEN1. In terms of processing, during periods of oxidative stress, Sec-46 may react with a superoxide radical, irreversibly lose hydroselenide and be converted to dehydroalanine.

Its subcellular location is the cytoplasm. It is found in the mitochondrion. The enzyme catalyses 2 glutathione + H2O2 = glutathione disulfide + 2 H2O. It catalyses the reaction a hydroperoxy polyunsaturated fatty acid + 2 glutathione = a hydroxy polyunsaturated fatty acid + glutathione disulfide + H2O. It carries out the reaction tert-butyl hydroperoxide + 2 glutathione = tert-butanol + glutathione disulfide + H2O. The catalysed reaction is cumene hydroperoxide + 2 glutathione = 2-phenylpropan-2-ol + glutathione disulfide + H2O. The enzyme catalyses (13S)-hydroperoxy-(9Z,11E)-octadecadienoate + 2 glutathione = (13S)-hydroxy-(9Z,11E)-octadecadienoate + glutathione disulfide + H2O. It catalyses the reaction (9S)-hydroperoxy-(10E,12Z)-octadecadienoate + 2 glutathione = (9S)-hydroxy-(10E,12Z)-octadecadienoate + glutathione disulfide + H2O. It carries out the reaction (5S)-hydroperoxy-(6E,8Z,11Z,14Z)-eicosatetraenoate + 2 glutathione = (5S)-hydroxy-(6E,8Z,11Z,14Z)-eicosatetraenoate + glutathione disulfide + H2O. The catalysed reaction is (12S)-hydroperoxy-(5Z,8Z,10E,14Z)-eicosatetraenoate + 2 glutathione = (12S)-hydroxy-(5Z,8Z,10E,14Z)-eicosatetraenoate + glutathione disulfide + H2O. The enzyme catalyses (12R)-hydroperoxy-(5Z,8Z,10E,14Z)-eicosatetraenoate + 2 glutathione = (12R)-hydroxy-(5Z,8Z,10E,14Z)-eicosatetraenoate + glutathione disulfide + H2O. It catalyses the reaction (15S)-hydroperoxy-(5Z,8Z,11Z,13E)-eicosatetraenoate + 2 glutathione = (15S)-hydroxy-(5Z,8Z,11Z,13E)-eicosatetraenoate + glutathione disulfide + H2O. It carries out the reaction (5S)-hydroperoxy-(6E,8Z,11Z,14Z,17Z)-eicosapentaenoate + 2 glutathione = (5S)-hydroxy-(6E,8Z,11Z,14Z,17Z)-eicosapentaenoate + glutathione disulfide + H2O. The catalysed reaction is (12S)-hydroperoxy-(5Z,8Z,10E,14Z,17Z)-eicosapentaenoate + 2 glutathione = (12S)-hydroxy-(5Z,8Z,10E,14Z,17Z)-eicosapentaenoate + glutathione disulfide + H2O. The enzyme catalyses (15S)-hydroperoxy-(5Z,8Z,11Z,13E,17Z)-eicosapentaenoate + 2 glutathione = (15S)-hydroxy-(5Z,8Z,11Z,13E,17Z)-eicosapentaenoate + glutathione disulfide + H2O. It catalyses the reaction (15S)-hydroperoxy-(11Z,13E)-eicosadienoate + 2 glutathione = (15S)-hydroxy-(11Z,13E)-eicosadienoate + glutathione disulfide + H2O. It carries out the reaction (17S)-hydroperoxy-(4Z,7Z,10Z,13Z,15E,19Z)-docosahexaenoate + 2 glutathione = (17S)-hydroxy-(4Z,7Z,10Z,13Z,15E,19Z)-docosahexaenoate + glutathione disulfide + H2O. Its function is as follows. Catalyzes the reduction of hydroperoxides in a glutathione-dependent manner thus regulating cellular redox homeostasis. Can reduce small soluble hydroperoxides such as H2O2, cumene hydroperoxide and tert-butyl hydroperoxide, as well as several fatty acid-derived hydroperoxides. In platelets catalyzes the reduction of 12-hydroperoxyeicosatetraenoic acid, the primary product of the arachidonate 12-lipoxygenase pathway. The polypeptide is Glutathione peroxidase 1 (GPX1) (Oryctolagus cuniculus (Rabbit)).